Reading from the N-terminus, the 699-residue chain is Ferric reduction oxidase 4 (699 aa).

Residues 1–9 (MGNMRSLVK) are Cytoplasmic-facing. Residues 10–29 (TLMVVLFLGWILVWIMISTN) traverse the membrane as a helical segment. Residues 30-54 (LFKSKWTPKLSKYLNTTYFGPQGTN) lie on the Lumenal side of the membrane. Residues 55-73 (LVLLTVPMMFIAVLSCVYL) traverse the membrane as a helical segment. Residues 74 to 101 (HIQKKPTQPQREWKLKRIMGRVIMVMNP) lie on the Cytoplasmic side of the membrane. A helical membrane pass occupies residues 102–125 (LGIVTATELTFSLLFVALLAWSLY). Over 126–190 (NYLYLSYHVH…VGLTSESSIK (65 aa)) the chain is Lumenal. The 119-residue stretch at 157-275 (GYVGNICWAF…HHLYGLYIVF (119 aa)) folds into the Ferric oxidoreductase domain. A helical transmembrane segment spans residues 191–214 (YHIWLGHVSNFCFLVHTVVFLIYW). Positions 192 and 206 each coordinate heme. Over 215–264 (AMINKLMETFAWNPTYVPNLAGTIAMVIGIAMWVTSLPSFRRKKFEIFFY) the chain is Cytoplasmic. The chain crosses the membrane as a helical span at residues 265 to 289 (THHLYGLYIVFYVIHVGDSWFCMIL). His-266 and His-279 together coordinate heme. The Lumenal portion of the chain corresponds to 290-311 (PNIFLFFIDRYLRFLQSTKRSR). In terms of domain architecture, FAD-binding FR-type spans 305–408 (QSTKRSRLVS…EGPYGPNSFD (104 aa)). A helical transmembrane segment spans residues 312–332 (LVSARILPSDNLELTFSKTPG). The Cytoplasmic segment spans residues 333–525 (LHYTPTSILF…PISPVLGPNN (193 aa)). 354-357 (HPFT) is a binding site for FAD. Residue 400–403 (GPYG) participates in NAD(+) binding. A helical transmembrane segment spans residues 526–548 (FLWLGVVILSSFVMFLLLIGIVT). Over 549 to 568 (RYYIYPVDHNTGSIYNFSYR) the chain is Lumenal. Residues 569–590 (GLWDMFLGSACIFISSSVVFLW) traverse the membrane as a helical segment. Residues 591 to 699 (RKKQNKEGDK…LHFEAISFNW (109 aa)) lie on the Cytoplasmic side of the membrane.

It belongs to the ferric reductase (FRE) family. The cofactor is FAD. As to expression, expressed in siliques. Detected at low levels in roots, cotyledon veins and shoots.

It is found in the membrane. The catalysed reaction is 2 a Fe(II)-siderophore + NAD(+) + H(+) = 2 a Fe(III)-siderophore + NADH. Functionally, ferric chelate reductase. May participate in the transport of electrons to a Fe(3+) ion via FAD and heme intermediates. May function as root surface cupric chelate reductase and participate in the reduction of Cu(2+), for Cu(+) acquisition via Cu(+) transporters in response to copper deficiency. This is Ferric reduction oxidase 4 (FRO4) from Arabidopsis thaliana (Mouse-ear cress).